Consider the following 235-residue polypeptide: Large ribosomal subunit protein uL1c (235 aa).

The protein belongs to the universal ribosomal protein uL1 family. Part of the 50S ribosomal subunit.

It localises to the plastid. It is found in the chloroplast. In terms of biological role, binds directly to 23S rRNA. Might be involved in E site tRNA release (Potential). The chain is Large ribosomal subunit protein uL1c (rpl1) from Gracilaria tenuistipitata var. liui (Red alga).